We begin with the raw amino-acid sequence, 616 residues long: MPKYRSATTTHGRNMAGARALWRATGMTDADFGKPIIAVVNSFTQFVPGHVHLRDLGKLVAEQIEAAGGVAKEFNTIAVDDGIAMGHGGMLYSLPSRELIADSVEYMVNAHCADAMVCISNCDKITPGMLMASLRLNIPVIFVSGGPMEAGKTKLSDRIIKLDLVDAMIQGADPKVSDSQSDQVERSACPTCGSCSGMFTANSMNCLTEALGLSQPGNGSLLATHADRKQLFLNAGKRIVELTKRYYEQNDESALPRNIASKAAFENAMTLDIAMGGSTNTVLHLLAAAQEAEIDFTMSDIDKLSRKVPQLCKVAPSTQKYHMEDVHRAGGVIGILGELDRAGLLNRDVKNVLGLTLPQTLEQYDVMLTQDDAVKNMFRAGPAGIRTTQAFSQDCRWDSLDDDRANGCIRSLEHAYSKDGGLAVLYGNFAENGCIVKTAGVDDSILKFTGPAKVYESQDDAVEAILGGKVVAGDVVVIRYEGPKGGPGMQEMLYPTSFLKSMGLGKACALITDGRFSGGTSGLSIGHVSPEAASGGSIGLIEDGDLIAIDIPNRGIQLQVSDAELAARREAQEARGDKAWTPKNRERQVSFALRAYASLATSADKGAVRDKSKLGG.

Residue D81 coordinates Mg(2+). [2Fe-2S] cluster is bound at residue C122. Positions 123 and 124 each coordinate Mg(2+). An N6-carboxylysine modification is found at K124. C195 contacts [2Fe-2S] cluster. Position 491 (E491) interacts with Mg(2+). The Proton acceptor role is filled by S517.

This sequence belongs to the IlvD/Edd family. In terms of assembly, homodimer. The cofactor is [2Fe-2S] cluster. Mg(2+) serves as cofactor.

It catalyses the reaction (2R)-2,3-dihydroxy-3-methylbutanoate = 3-methyl-2-oxobutanoate + H2O. It carries out the reaction (2R,3R)-2,3-dihydroxy-3-methylpentanoate = (S)-3-methyl-2-oxopentanoate + H2O. It participates in amino-acid biosynthesis; L-isoleucine biosynthesis; L-isoleucine from 2-oxobutanoate: step 3/4. It functions in the pathway amino-acid biosynthesis; L-valine biosynthesis; L-valine from pyruvate: step 3/4. Its function is as follows. Functions in the biosynthesis of branched-chain amino acids. Catalyzes the dehydration of (2R,3R)-2,3-dihydroxy-3-methylpentanoate (2,3-dihydroxy-3-methylvalerate) into 2-oxo-3-methylpentanoate (2-oxo-3-methylvalerate) and of (2R)-2,3-dihydroxy-3-methylbutanoate (2,3-dihydroxyisovalerate) into 2-oxo-3-methylbutanoate (2-oxoisovalerate), the penultimate precursor to L-isoleucine and L-valine, respectively. The sequence is that of Dihydroxy-acid dehydratase from Escherichia coli O9:H4 (strain HS).